A 1480-amino-acid chain; its full sequence is C-type mannose receptor 2 (1480 aa).

The signal sequence occupies residues 1–30 (MGPIRPALAPWPRHLLRCVLLLGGLRLGHP). Residues 31-1413 (ADSAAALLEP…SAALPENPVA (1383 aa)) are Extracellular-facing. One can recognise a Ricin B-type lectin domain in the interval 40 to 166 (PDVFLIFSQG…WNIYGSEEDL (127 aa)). Cystine bridges form between C53/C67 and C92/C111. N101 and N139 each carry an N-linked (GlcNAc...) asparagine glycan. A Fibronectin type-II domain is found at 181-229 (SHGKPCTIPFKYDNQWFHGCTSTGREDGHLWCATTQDYGKDERWGFCPI). Disulfide bonds link C186-C212, C200-C227, C265-C358, and C334-C350. A C-type lectin 1 domain is found at 243–359 (LTDSCYQFNF…CSIALPYVCK (117 aa)). N-linked (GlcNAc...) asparagine glycosylation occurs at N363. C-type lectin domains are found at residues 388–504 (FQGH…SICK), 527–643 (HSPS…RYIC), 677–808 (KLRH…WICK), 831–950 (FQEA…YICK), 978–1106 (FLNK…GFIC), 1131–1242 (YLNR…GAVC), and 1271–1391 (FREH…GVVC). Intrachain disulfides connect C409-C503, C480-C495, C617-C634, C703-C807, C784-C799, C852-C949, and C926-C941. N1028 carries an N-linked (GlcNAc...) asparagine glycan. A disulfide bridge connects residues C1077 and C1097. A Glycyl lysine isopeptide (Lys-Gly) (interchain with G-Cter in SUMO1) cross-link involves residue K1141. An intrachain disulfide couples C1219 to C1233. N1348 is a glycosylation site (N-linked (GlcNAc...) asparagine). Residues C1367 and C1382 are joined by a disulfide bond. The helical transmembrane segment at 1414 to 1434 (LVVVLTAAVLLLLALLTGALI) threads the bilayer. Residues 1435–1480 (LYRRRQSAERGSFEGARYSRSSRSGPAEATEKNILVSDMEMNEQQE) are Cytoplasmic-facing. Positions 1446-1480 (SFEGARYSRSSRSGPAEATEKNILVSDMEMNEQQE) are disordered.

In terms of assembly, interacts directly with PLAUR/UPAR and PLAU/pro-UPA to form a tri-molecular complex. Interacts with collagen V. Interacts with C-terminal region of type I collagen/COL1A1. N-glycosylated. In terms of processing, phosphorylated.

The protein localises to the cell membrane. Its function is as follows. May play a role as endocytotic lectin receptor displaying calcium-dependent lectin activity. Internalizes glycosylated ligands from the extracellular space for release in an endosomal compartment via clathrin-mediated endocytosis. May be involved in plasminogen activation system controlling the extracellular level of PLAUR/PLAU, and thus may regulate protease activity at the cell surface. May contribute to cellular uptake, remodeling and degradation of extracellular collagen matrices. May participate in remodeling of extracellular matrix cooperating with the matrix metalloproteinases (MMPs) secreted by hepatic stellate cells. May mediate endocytosis of partially degraded collagens and glycoproteins produced in the extracellular matrix by MMPs. This is C-type mannose receptor 2 (Mrc2) from Rattus norvegicus (Rat).